A 1086-amino-acid polypeptide reads, in one-letter code: Phosphinothricin tripeptide synthetase PhsC (1086 aa).

The segment at 22-43 (RLRAAAAPGPDPAIPRRPDDDG) is disordered. The condensation stretch occupies residues 45–484 (VPLSFAQHRL…LAALPVLTRD (440 aa)). The adenylation stretch occupies residues 510–901 (LEDSARRHPD…GRTDHQVKLR (392 aa)). The segment at 983–1007 (GKLDREALPDPLAQSGDTAGNRPPL) is disordered. The Carrier domain maps to 1006–1081 (PLLDPVEERI…GLARSVSAER (76 aa)). S1041 bears the O-(pantetheine 4'-phosphoryl)serine mark.

Belongs to the NRP synthetase family. It depends on pantetheine 4'-phosphate as a cofactor.

It carries out the reaction holo-[peptidyl-carrier protein] + L-alanine + ATP = L-alanyl-[peptidyl-carrier protein] + AMP + diphosphate. Its pathway is secondary metabolite biosynthesis; bialaphos biosynthesis. Involved in the biosynthesis of phosphinothricin tripeptide (PTT), also known as bialaphos (BA), a natural-product antibiotic and potent herbicide. Adenylates L-alanine and loads it onto a peptidyl carrier domain via a thioester linkage to the phosphopanthetheine moiety. Shows weaker activity with aminobutyric acid and L-serine. The chain is Phosphinothricin tripeptide synthetase PhsC from Streptomyces viridochromogenes (strain DSM 40736 / JCM 4977 / BCRC 1201 / Tue 494).